A 107-amino-acid polypeptide reads, in one-letter code: ADDKNPLEECFREDDYEEFLEIAKNGLEGWYANLGPMRYPVKPSEEGKHDDIFAYEKFDEIVGGMDKKFWEDDGIHGGKETFCYSPMIQKPYQFQHFSEALTAPVGR.

Residue 35 to 38 (GPMR) participates in FAD binding. Substrate is bound by residues arginine 38 and histidine 49.

Belongs to the flavin monoamine oxidase family. FIG1 subfamily. Homodimer; non-covalently linked. FAD is required as a cofactor. N-glycosylated. As to expression, expressed by the venom gland.

It is found in the secreted. It carries out the reaction an L-alpha-amino acid + O2 + H2O = a 2-oxocarboxylate + H2O2 + NH4(+). The enzyme catalyses L-leucine + O2 + H2O = 4-methyl-2-oxopentanoate + H2O2 + NH4(+). The catalysed reaction is L-phenylalanine + O2 + H2O = 3-phenylpyruvate + H2O2 + NH4(+). It catalyses the reaction L-tryptophan + O2 + H2O = indole-3-pyruvate + H2O2 + NH4(+). It carries out the reaction L-methionine + O2 + H2O = 4-methylsulfanyl-2-oxobutanoate + H2O2 + NH4(+). The enzyme catalyses L-isoleucine + O2 + H2O = (S)-3-methyl-2-oxopentanoate + H2O2 + NH4(+). The catalysed reaction is L-arginine + O2 + H2O = 5-guanidino-2-oxopentanoate + H2O2 + NH4(+). It catalyses the reaction L-histidine + O2 + H2O = 3-(imidazol-5-yl)pyruvate + H2O2 + NH4(+). Its function is as follows. Catalyzes an oxidative deamination of predominantly hydrophobic and aromatic L-amino acids, thus producing hydrogen peroxide that may contribute to the diverse toxic effects of this enzyme. Shows high activity on L-Met, moderate activity on L-Trp, L-Leu, L-His, L-Phe, L-Arg, L-Ile, low activity on L-Val, L-Glu, L-Lys, L-Gln, L-Asn, L-Tyr, L-Ala, and no activity on L-Asp, L-Ser, L-Pro, L-Gly, L-Thr and L-Cys. Shows antimicrobial activity inhibiting the growth of both Gram-negative and Gram-positive bacteria. Also inhibits platelet aggregation induced by ADP or collagen. Effects of snake L-amino oxidases on platelets are controversial, since they either induce aggregation or inhibit agonist-induced aggregation. These different effects are probably due to different experimental conditions. This protein may also induce hemorrhage, hemolysis, edema, apoptosis, and have antiparasitic activities. The protein is L-amino-acid oxidase of Macrovipera lebetinus (Levantine viper).